The sequence spans 329 residues: DNA-directed RNA polymerase subunit alpha (329 aa).

The segment at 1-235 (MQGSVTEFLK…EQLEAFVDLR (235 aa)) is alpha N-terminal domain (alpha-NTD). The tract at residues 249-329 (FDPILLRPVD…NWPPASIADE (81 aa)) is alpha C-terminal domain (alpha-CTD).

The protein belongs to the RNA polymerase alpha chain family. As to quaternary structure, homodimer. The RNAP catalytic core consists of 2 alpha, 1 beta, 1 beta' and 1 omega subunit. When a sigma factor is associated with the core the holoenzyme is formed, which can initiate transcription.

It catalyses the reaction RNA(n) + a ribonucleoside 5'-triphosphate = RNA(n+1) + diphosphate. Its function is as follows. DNA-dependent RNA polymerase catalyzes the transcription of DNA into RNA using the four ribonucleoside triphosphates as substrates. In Cronobacter sakazakii (strain ATCC BAA-894) (Enterobacter sakazakii), this protein is DNA-directed RNA polymerase subunit alpha.